Consider the following 132-residue polypeptide: Small ribosomal subunit protein uS11 (132 aa).

Belongs to the universal ribosomal protein uS11 family. As to quaternary structure, part of the 30S ribosomal subunit. Interacts with proteins S7 and S18. Binds to IF-3.

Functionally, located on the platform of the 30S subunit, it bridges several disparate RNA helices of the 16S rRNA. Forms part of the Shine-Dalgarno cleft in the 70S ribosome. The chain is Small ribosomal subunit protein uS11 from Alcanivorax borkumensis (strain ATCC 700651 / DSM 11573 / NCIMB 13689 / SK2).